Consider the following 91-residue polypeptide: MKIISKMLVGALALAVTNVYAAELMTKAEFEKVESQYEKIGDISTSNEMSTADAKEDLIKKADEKGADVLVLTSGQTDNKIHGTANIYKKK.

The N-terminal stretch at 1–21 is a signal peptide; it reads MKIISKMLVGALALAVTNVYA.

Belongs to the BhsA/McbA family.

It localises to the periplasm. This is an uncharacterized protein from Escherichia coli (strain K12).